A 483-amino-acid polypeptide reads, in one-letter code: Inositol-pentakisphosphate 2-kinase (483 aa).

The EXKPK motif signature appears at 140-144; sequence EIKPK. The interval 279–298 is disordered; it reads SNRSGEPRKMHLSESKPHCE. The span at 281-297 shows a compositional bias: basic and acidic residues; it reads RSGEPRKMHLSESKPHC.

It belongs to the IPK1 type 2 family. Expressed both maternally and zygotically. Expressed in cleavage-stage embryos. Ubiquitously distributed throughout blastula stages of embryogenesis. At the onset of gastrulation, it is enriched in cells around the blastoderm margin. At shield stage, expression is detected in the deep involuted cells that contribute to mesendoderm. During mid and late gastrula stages, it is strongly expressed in axial mesendoderm. However, it is not present in the nascent tailbud at yolk plug closure (YPC) stage. Expression in axial mesendoderm is reduced at the 2 somite stage (SS). At 6 SS, it is expressed in cells surrounding Kupffer's vesicle, but apparently not within. By 10 SS, it is no longer detected as a specific signal above background.

It localises to the cytoplasm. Its subcellular location is the nucleus. The catalysed reaction is 1D-myo-inositol 1,3,4,5,6-pentakisphosphate + ATP = 1D-myo-inositol hexakisphosphate + ADP + H(+). Functionally, phosphorylates Ins(1,3,4,5,6)P5 at position 2 to form Ins(1,2,3,4,5,6)P6 (InsP6 or phytate). InsP6 is involved in many processes such as mRNA export, non-homologous end-joining, endocytosis and ion channel regulation. InsP6 also acts as a key regulator of left-right asymmetry in embryo, probably by regulating asymmetric Ca(2+) during left-right specification. This Danio rerio (Zebrafish) protein is Inositol-pentakisphosphate 2-kinase (ippk).